Consider the following 582-residue polypeptide: Aspartate--tRNA ligase (582 aa).

Glutamate 174 is an L-aspartate binding site. The interval 198–201 (QITK) is aspartate. Arginine 220 contributes to the L-aspartate binding site. ATP contacts are provided by residues 220 to 222 (RDE) and glutamine 229. Histidine 443 provides a ligand contact to L-aspartate. Glutamate 477 contributes to the ATP binding site. Residue arginine 484 coordinates L-aspartate. Residue 529–532 (GLDR) participates in ATP binding.

This sequence belongs to the class-II aminoacyl-tRNA synthetase family. Type 1 subfamily. As to quaternary structure, homodimer.

The protein resides in the cytoplasm. It carries out the reaction tRNA(Asp) + L-aspartate + ATP = L-aspartyl-tRNA(Asp) + AMP + diphosphate. Catalyzes the attachment of L-aspartate to tRNA(Asp) in a two-step reaction: L-aspartate is first activated by ATP to form Asp-AMP and then transferred to the acceptor end of tRNA(Asp). The protein is Aspartate--tRNA ligase of Streptococcus equi subsp. zooepidemicus (strain MGCS10565).